A 181-amino-acid polypeptide reads, in one-letter code: MSKAIKQNLADSKKMSAELFCLTYGAMVTEMLKDYEDPKDVTVQLDKMGFNMGTRLADDFLAKNANVPRCVDTRQIADVLCRNAIPCYLGVSATASSWSSGDREFIITLESNPLTELVQVPPNLVSAGLSYSQMIAGAIRGALEAVHFKVYASAADSGANTEIRIRFDQVLKDSLPAGEDD.

A lipid anchor (S-palmitoyl cysteine) is attached at cysteine 70.

It belongs to the TRAPP small subunits family. BET3 subfamily. Homodimer. Part of the multisubunit TRAPP (transport protein particle) complex.

It localises to the golgi apparatus. Its subcellular location is the cis-Golgi network. The protein localises to the endoplasmic reticulum. In terms of biological role, may play a role in vesicular transport from endoplasmic reticulum to Golgi. Required for the systemic spread of the RNAi response. In Caenorhabditis briggsae, this protein is Trafficking protein particle complex subunit 3 homolog.